We begin with the raw amino-acid sequence, 1201 residues long: MDKLPPSMRKRLYSLPQQVGAKAWIMDEEEDGEEEGAGGRQDPSRRSIRLRPLPSPSPSVAAGCSESRGAALGATESEGPGRSAGKSSTNGDCRRFRGSLASLGSRGGGSGGAGGGSSLGHLHDSAEERRLIAAEGDASPGEDRTPPGLATEPERPATAAQPAASPPPQQPPQPASASCEQPSADTAIKVEGGAAASDQILPEAEVRLGQSGFMQRQFGAMLQPGVNKFSLRMFGSQKAVEREQERVKSAGFWIIHPYSDFRFYWDLTMLLLMVGNLIIIPVGITFFKDENTTPWIVFNVVSDTFFLIDLVLNFRTGIVVEDNTEIILDPQRIKMKYLKSWFVVDFISSIPVDYIFLIVETRIDSEVYKTARALRIVRFTKILSLLRLLRLSRLIRYIHQWEEIFHMTYDLASAVVRIVNLIGMMLLLCHWDGCLQFLVPMLQDFPHDCWVSINGMVNNSWGKQYSYALFKAMSHMLCIGYGRQAPVGMSDVWLTMLSMIVGATCYAMFIGHATALIQSLDSSRRQYQEKYKQVEQYMSFHKLPPDTRQRIHDYYEHRYQGKMFDEESILGELSEPLREEIINFNCRKLVASMPLFANADPNFVTSMLTKLRFEVFQPGDYIIREGTIGKKMYFIQHGVVSVLTKGNKETKLADGSYFGEICLLTRGRRTASVRADTYCRLYSLSVDNFNEVLEEYPMMRRAFETVALDRLDRIGKKNSILLHKVQHDLNSGVFNYQENEIIQQIVRHDREMAHCAHRVQAAASATPTPTPVIWTPLIQAPLQAAAATTSVAIALTHHPRLPAAIFRPPPGPGLGNLGAGQTPRHPRRLQSLIPSALGSASPASSPSQVDTPSSSSFHIQQLAGFSAPPGLSPLLPSSSSSPPPGACGSPPAPTPSTSTAAAASTTGFGHFHKALGGSLSSSDSPLLTPLQPGARSPQAAQPPPPLPGARGGLGLLEHFLPPPPSSRSPSSSPGQLGQPPGELSLGLAAGPSSTPETPPRPERPSFMAGASGGASPVAFTPRGGLSPPGHSPGPPRTFPSAPPRASGSHGSLLLPPASSPPPPQVPQRRGTPPLTPGRLTQDLKLISASQPALPQDGAQTLRRASPHSSGESVAAFSLYPRAGGGSGSSGGLGPPGRPYGAIPGQHVTLPRKTSSGSLPPPLSLFGARAASSGGPPLTTAAPQREPGARSEPVRSKLPSNL.

Topologically, residues 1 to 263 are cytoplasmic; that stretch reads MDKLPPSMRK…IIHPYSDFRF (263 aa). The segment at 24-183 is disordered; the sequence is WIMDEEEDGE…PASASCEQPS (160 aa). Residues 26 to 36 are compositionally biased toward acidic residues; the sequence is MDEEEDGEEEG. A compositionally biased stretch (gly residues) spans 105-118; that stretch reads SRGGGSGGAGGGSS. Residues 121 to 132 are compositionally biased toward basic and acidic residues; it reads HLHDSAEERRLI. Residue S139 is modified to Phosphoserine. The segment covering 164-174 has biased composition (pro residues); sequence ASPPPQQPPQP. Residues 209–260 are involved in subunit assembly; sequence GQSGFMQRQFGAMLQPGVNKFSLRMFGSQKAVEREQERVKSAGFWIIHPYSD. Residues 264–286 traverse the membrane as a helical segment; that stretch reads YWDLTMLLLMVGNLIIIPVGITF. Residues 287 to 293 are Extracellular-facing; the sequence is FKDENTT. The chain crosses the membrane as a helical span at residues 294–314; that stretch reads PWIVFNVVSDTFFLIDLVLNF. The Cytoplasmic portion of the chain corresponds to 315-336; that stretch reads RTGIVVEDNTEIILDPQRIKMK. A helical transmembrane segment spans residues 337–359; sequence YLKSWFVVDFISSIPVDYIFLIV. Residues 360-378 lie on the Extracellular side of the membrane; it reads ETRIDSEVYKTARALRIVR. Residues 379 to 399 traverse the membrane as a helical; Voltage-sensor segment; the sequence is FTKILSLLRLLRLSRLIRYIH. At 400–413 the chain is on the cytoplasmic side; sequence QWEEIFHMTYDLAS. Residues 414–436 traverse the membrane as a helical segment; sequence AVVRIVNLIGMMLLLCHWDGCLQ. Topologically, residues 437 to 464 are extracellular; it reads FLVPMLQDFPHDCWVSINGMVNNSWGKQ. A glycan (N-linked (GlcNAc...) asparagine) is linked at N458. Residues 465-486 constitute an intramembrane region (pore-forming); the sequence is YSYALFKAMSHMLCIGYGRQAP. The Extracellular portion of the chain corresponds to 487 to 491; that stretch reads VGMSD. The chain crosses the membrane as a helical span at residues 492–517; the sequence is VWLTMLSMIVGATCYAMFIGHATALI. At 518–1201 the chain is on the cytoplasmic side; that stretch reads QSLDSSRRQY…PVRSKLPSNL (684 aa). 3',5'-cyclic GMP contacts are provided by Y559, K562, F564, and E566. G659, E660, C662, R669, T670, V673, and R710 together coordinate 3',5'-cyclic AMP. 2 disordered regions span residues 804–902 and 914–1201; these read AIFR…TAAA and ALGG…PSNL. Composition is skewed to low complexity over residues 831–856 and 866–880; these read SLIP…SSSS and SAPP…SSSS. Pro residues predominate over residues 881-894; the sequence is SPPPGACGSPPAPT. Composition is skewed to low complexity over residues 915 to 939 and 967 to 995; these read LGGS…SPQA and RSPS…SSTP. The segment covering 1029–1042 has biased composition (pro residues); sequence GHSPGPPRTFPSAP. Positions 1045 to 1056 are enriched in low complexity; that stretch reads ASGSHGSLLLPP. Phosphoserine is present on residues S1105 and S1108. Residues 1122–1134 show a composition bias toward gly residues; the sequence is AGGGSGSSGGLGP.

The protein belongs to the potassium channel HCN family. As to quaternary structure, homotetramer. The potassium channel is composed of a homo- or heterotetrameric complex of pore-forming subunits. Interacts with PEX5L with a 4:4 HCN4:PEX5L stoichiometry; reduces the effects of cAMP on the voltage-dependence and rate of activation. Interacts with IRAG1; regulates HCN4 channel activity. Interacts with IRAG2; regulates HCN4 channel activity. Post-translationally, S-palmitoylated. As to expression, detected in a subset of elongated cells in taste buds.

The protein resides in the cell membrane. It carries out the reaction K(+)(in) = K(+)(out). The enzyme catalyses Na(+)(in) = Na(+)(out). Its activity is regulated as follows. Activated by cAMP, and to a lesser extent by cGMP and cCMP. cAMP binding causes a conformation change that leads to the assembly of an active tetramer and channel opening. Binding of cAMP removes a tonic inhibition conferred by cyclic nucleotide-binding domain (CNBD) on channel opening. Cyclic dinucleotides can modulate HCN4 channel; cyclic dinucleotides acting as potent antagonists of cAMP. Inhibited by extracellular Cs(+) ions. Auxiliary subunits can also regulate HCN4 channel. IRAG1 causes a gain-of-function by shifting HCN4 activation to more depolarized membrane potentials in the absence of cAMP. In contrast, IRAG2 causes a loss-of-function by inhibiting cAMP-dependent potentiation of HCN4 activation. Functionally, hyperpolarization-activated ion channel that are permeable to Na(+) and K(+) ions with very slow activation and inactivation. Exhibits higher selectivity for K(+) over Na(+) ions. Contributes to the native pacemaker currents in heart (If) that regulate the rhythm of heart beat. Contributes to the native pacemaker currents in neurons (Ih). May mediate responses to sour stimuli. This chain is Potassium/sodium hyperpolarization-activated cyclic nucleotide-gated channel 4 (Hcn4), found in Mus musculus (Mouse).